Consider the following 382-residue polypeptide: Carbamoyl phosphate synthase small chain (382 aa).

A CPSase region spans residues M1–E187. Residues S47, G239, and G241 each coordinate L-glutamine. Residues T191–Q377 enclose the Glutamine amidotransferase type-1 domain. C267 (nucleophile) is an active-site residue. L-glutamine contacts are provided by L268, Q271, N307, G309, and F310. Catalysis depends on residues H350 and E352.

The protein belongs to the CarA family. As to quaternary structure, composed of two chains; the small (or glutamine) chain promotes the hydrolysis of glutamine to ammonia, which is used by the large (or ammonia) chain to synthesize carbamoyl phosphate. Tetramer of heterodimers (alpha,beta)4.

It carries out the reaction hydrogencarbonate + L-glutamine + 2 ATP + H2O = carbamoyl phosphate + L-glutamate + 2 ADP + phosphate + 2 H(+). The enzyme catalyses L-glutamine + H2O = L-glutamate + NH4(+). The protein operates within amino-acid biosynthesis; L-arginine biosynthesis; carbamoyl phosphate from bicarbonate: step 1/1. It participates in pyrimidine metabolism; UMP biosynthesis via de novo pathway; (S)-dihydroorotate from bicarbonate: step 1/3. Its function is as follows. Small subunit of the glutamine-dependent carbamoyl phosphate synthetase (CPSase). CPSase catalyzes the formation of carbamoyl phosphate from the ammonia moiety of glutamine, carbonate, and phosphate donated by ATP, constituting the first step of 2 biosynthetic pathways, one leading to arginine and/or urea and the other to pyrimidine nucleotides. The small subunit (glutamine amidotransferase) binds and cleaves glutamine to supply the large subunit with the substrate ammonia. The chain is Carbamoyl phosphate synthase small chain from Thermosynechococcus vestitus (strain NIES-2133 / IAM M-273 / BP-1).